The sequence spans 262 residues: tRNA pseudouridine synthase B (262 aa).

The active-site Nucleophile is the D77.

Belongs to the pseudouridine synthase TruB family. Type 1 subfamily.

It catalyses the reaction uridine(55) in tRNA = pseudouridine(55) in tRNA. Functionally, responsible for synthesis of pseudouridine from uracil-55 in the psi GC loop of transfer RNAs. This Protochlamydia amoebophila (strain UWE25) protein is tRNA pseudouridine synthase B.